The chain runs to 189 residues: uncharacterized protein (189 aa).

This sequence belongs to the flavoredoxin family. FMN is required as a cofactor.

This is an uncharacterized protein from Escherichia coli (strain K12).